Here is an 864-residue protein sequence, read N- to C-terminus: Translation initiation factor IF-2 (864 aa).

Over residues 140–171 (DSRSLNTKKENKLKISNKDEQNKKFNQHRESN) the composition is skewed to basic and acidic residues. The interval 140–179 (DSRSLNTKKENKLKISNKDEQNKKFNQHRESNSFDLNHKK) is disordered. Residues 364–533 (IRAPVVTIMG…LLQAEMLELK (170 aa)) enclose the tr-type G domain. The interval 373–380 (GHVDHGKT) is G1. Residue 373–380 (GHVDHGKT) coordinates GTP. The interval 398-402 (GITQN) is G2. The tract at residues 419-422 (DTPG) is G3. GTP-binding positions include 419 to 423 (DTPGH) and 473 to 476 (NKID). Positions 473–476 (NKID) are G4. The tract at residues 509–511 (SAK) is G5.

It belongs to the TRAFAC class translation factor GTPase superfamily. Classic translation factor GTPase family. IF-2 subfamily.

The protein localises to the cytoplasm. In terms of biological role, one of the essential components for the initiation of protein synthesis. Protects formylmethionyl-tRNA from spontaneous hydrolysis and promotes its binding to the 30S ribosomal subunits. Also involved in the hydrolysis of GTP during the formation of the 70S ribosomal complex. This chain is Translation initiation factor IF-2, found in Buchnera aphidicola subsp. Acyrthosiphon pisum (strain 5A).